The chain runs to 195 residues: Putative nucleotidase BH1399 (195 aa).

It belongs to the 5'(3')-deoxyribonucleotidase family.

This chain is Putative nucleotidase BH1399, found in Halalkalibacterium halodurans (strain ATCC BAA-125 / DSM 18197 / FERM 7344 / JCM 9153 / C-125) (Bacillus halodurans).